A 176-amino-acid chain; its full sequence is Trypsin inhibitor 1B (176 aa).

2 disulfide bridges follow: Cys-39–Cys-83 and Cys-132–Cys-143.

The protein belongs to the protease inhibitor I3 (leguminous Kunitz-type inhibitor) family.

In terms of biological role, inhibits trypsin stoichiometrically. The sequence is that of Trypsin inhibitor 1B from Erythrina variegata (Indian coral tree).